The sequence spans 608 residues: Tectonic-3 (608 aa).

The N-terminal stretch at 1–22 (MRTPQLALLQVFLLMFPDGVRP) is a signal peptide. Residues 23-58 (QPSSSPSGAVPTSLDLQPGTVGGTLQSSSEATATRP) are disordered. The Extracellular portion of the chain corresponds to 23 to 586 (QPSSSPSGAV…AFSRGVSSQK (564 aa)). The span at 45–54 (GTLQSSSEAT) shows a compositional bias: polar residues. Residues Asn-78, Asn-179, and Asn-347 are each glycosylated (N-linked (GlcNAc...) asparagine). Residues 587–607 (CSVSPVLILCLLLLGVLNLET) traverse the membrane as a helical segment. A topological domain (cytoplasmic) is located at residue Thr-608.

The protein belongs to the tectonic family. In terms of assembly, part of the tectonic-like complex (also named B9 complex).

The protein localises to the membrane. Its function is as follows. Part of the tectonic-like complex which is required for tissue-specific ciliogenesis and may regulate ciliary membrane composition. May be involved in apoptosis regulation. Necessary for signal transduction through the sonic hedgehog (Shh) signaling pathway. The protein is Tectonic-3 (TCTN3) of Macaca fascicularis (Crab-eating macaque).